The following is a 286-amino-acid chain: Polyamine aminopropyltransferase (286 aa).

Positions 6 to 239 (PVWIDEVFED…GWWSWLYASD (234 aa)) constitute a PABS domain. Q34 contacts S-methyl-5'-thioadenosine. Positions 65 and 89 each coordinate spermidine. Residues E109 and 140-141 (DG) contribute to the S-methyl-5'-thioadenosine site. D159 (proton acceptor) is an active-site residue. A spermidine-binding site is contributed by 159-162 (DGSD). P166 is an S-methyl-5'-thioadenosine binding site.

Belongs to the spermidine/spermine synthase family. As to quaternary structure, homodimer or homotetramer. Homodimer.

The protein localises to the cytoplasm. It catalyses the reaction S-adenosyl 3-(methylsulfanyl)propylamine + putrescine = S-methyl-5'-thioadenosine + spermidine + H(+). The protein operates within amine and polyamine biosynthesis; spermidine biosynthesis; spermidine from putrescine: step 1/1. Its function is as follows. Catalyzes the irreversible transfer of a propylamine group from the amino donor S-adenosylmethioninamine (decarboxy-AdoMet) to putrescine (1,4-diaminobutane) to yield spermidine. The protein is Polyamine aminopropyltransferase of Synechococcus elongatus (strain ATCC 33912 / PCC 7942 / FACHB-805) (Anacystis nidulans R2).